We begin with the raw amino-acid sequence, 749 residues long: Transcription factor RFX3 (749 aa).

Residues 183 to 258 (HLQWLLDNYE…YHYYGIRVKP (76 aa)) constitute a DNA-binding region (RFX-type winged-helix). A disordered region spans residues 663–699 (VSPGNLDKDEGSEVESEMDEELDDSSEPQAKREKTEL). Positions 674 to 688 (SEVESEMDEELDDSS) are enriched in acidic residues.

The protein belongs to the RFX family. Heterodimer; heterodimerizes with RFX1 and RFX2, and RFX6.

It localises to the nucleus. Functionally, transcription factor required for ciliogenesis and islet cell differentiation during endocrine pancreas development. Essential for the differentiation of nodal monocilia and left-right asymmetry specification during embryogenesis. Required for the biogenesis of motile cilia by governing growth and beating efficiency of motile cells. Also required for ciliated ependymal cell differentiation. Regulates the expression of genes involved in ciliary assembly (DYNC2LI1, FOXJ1 and BBS4) and genes involved in ciliary motility (DNAH11, DNAH9 and DNAH5). Together with RFX6, participates in the differentiation of 4 of the 5 islet cell types during endocrine pancreas development, with the exception of pancreatic PP (polypeptide-producing) cells. Regulates transcription by forming a heterodimer with another RFX protein and binding to the X-box in the promoter of target genes. Represses transcription of MAP1A in non-neuronal cells but not in neuronal cells. This is Transcription factor RFX3 (RFX3) from Macaca fascicularis (Crab-eating macaque).